Reading from the N-terminus, the 460-residue chain is Glucan endo-1,3-beta-D-glucosidase (460 aa).

Positions 1 to 26 (MAANVQTSSLLFLVFLLLQNFYSANS) are cleaved as a signal peptide. Catalysis depends on Glu123, which acts as the Proton donor. Glu268 acts as the Nucleophile in catalysis. A disordered region spans residues 352–371 (NTQNPTTPATPTPTPKAAGS). An N-linked (GlcNAc...) asparagine glycan is attached at Asn355. Cys373 and Cys435 are joined by a disulfide. A glycan (N-linked (GlcNAc...) asparagine) is linked at Asn447.

This sequence belongs to the glycosyl hydrolase 17 family. In terms of assembly, homodimer. Post-translationally, glycosylated. In terms of processing, contains two additional disulfide bonds, but it is unclear if they are between the pairs Cys-392-Cys-398 and Cys-407-Cys-453 (PudMed:18096638) or between the pairs Cys-392-Cys-453 and Cys-398-Cys-407 (PudMed:12392450). As to expression, expressed only in pollen.

The protein localises to the secreted. The enzyme catalyses Hydrolysis of (1-&gt;3)-beta-D-glucosidic linkages in (1-&gt;3)-beta-D-glucans.. This chain is Glucan endo-1,3-beta-D-glucosidase (OLE9), found in Olea europaea (Common olive).